The primary structure comprises 880 residues: Valine--tRNA ligase (880 aa).

A 'HIGH' region motif is present at residues 49-59 (PNVTGRLHLGH). Positions 525 to 529 (KMSKS) match the 'KMSKS' region motif. Lys528 contributes to the ATP binding site. A coiled-coil region spans residues 809–879 (LEGLINIDEE…AVQKRMAELK (71 aa)).

It belongs to the class-I aminoacyl-tRNA synthetase family. ValS type 1 subfamily. Monomer.

The protein resides in the cytoplasm. The enzyme catalyses tRNA(Val) + L-valine + ATP = L-valyl-tRNA(Val) + AMP + diphosphate. Functionally, as ValRS can inadvertently accommodate and process structurally similar amino acids such as threonine, to avoid such errors, it has a 'posttransfer' editing activity that hydrolyzes mischarged Thr-tRNA(Val) in a tRNA-dependent manner. Catalyzes the attachment of valine to tRNA(Val). This Bacillus subtilis (strain 168) protein is Valine--tRNA ligase.